The following is a 132-amino-acid chain: ATP synthase epsilon chain (132 aa).

The protein belongs to the ATPase epsilon chain family. F-type ATPases have 2 components, CF(1) - the catalytic core - and CF(0) - the membrane proton channel. CF(1) has five subunits: alpha(3), beta(3), gamma(1), delta(1), epsilon(1). CF(0) has three main subunits: a, b and c.

It is found in the cell membrane. Produces ATP from ADP in the presence of a proton gradient across the membrane. The polypeptide is ATP synthase epsilon chain (Desulforamulus reducens (strain ATCC BAA-1160 / DSM 100696 / MI-1) (Desulfotomaculum reducens)).